We begin with the raw amino-acid sequence, 380 residues long: Cytochrome b (380 aa).

4 consecutive transmembrane segments (helical) span residues 34–54, 78–99, 114–134, and 179–199; these read FGSL…LLAT, WLIR…YLHI, WNTG…GYVL, and FFAL…IHLT. Residues H84 and H98 each contribute to the heme b site. Residues H183 and H197 each coordinate heme b. Position 202 (H202) interacts with a ubiquinone. 4 helical membrane passes run 227–247, 289–309, 321–341, and 348–368; these read LKDT…ALFS, LGGV…PLLH, FSQF…WVGS, and FIII…ILLP.

This sequence belongs to the cytochrome b family. In terms of assembly, the cytochrome bc1 complex contains 11 subunits: 3 respiratory subunits (MT-CYB, CYC1 and UQCRFS1), 2 core proteins (UQCRC1 and UQCRC2) and 6 low-molecular weight proteins (UQCRH/QCR6, UQCRB/QCR7, UQCRQ/QCR8, UQCR10/QCR9, UQCR11/QCR10 and a cleavage product of UQCRFS1). This cytochrome bc1 complex then forms a dimer. Requires heme b as cofactor.

The protein resides in the mitochondrion inner membrane. Functionally, component of the ubiquinol-cytochrome c reductase complex (complex III or cytochrome b-c1 complex) that is part of the mitochondrial respiratory chain. The b-c1 complex mediates electron transfer from ubiquinol to cytochrome c. Contributes to the generation of a proton gradient across the mitochondrial membrane that is then used for ATP synthesis. The polypeptide is Cytochrome b (MT-CYB) (Garrodia nereis (Grey-backed storm-petrel)).